Reading from the N-terminus, the 547-residue chain is MDPMELRNVNIEPDDESSSGESAPDSYIGIGNSEKAAMSSQFANEDTESQKFLTNGFLGKKKLADYADEHHPGTTSFGMSSFNLSNAIMGSGILGLSYAMANTGIILFIIMLLAVAILSLYSVHLLLKTAKEGGSLIYEKLGEKAFGWPGKIGAFVSITMQNIGAMSSYLFIIKYELPEVIRAFMGLEENTGEWYLNGNYLIIFVSVGIILPLSLLKNLGYLGYTSGFSLTCMVFFVSVVIYKKFQIPCPLPVLDHSVGNLSFNNTLPMHVVMLPNNSESSDVNFMMDYTHRNPAGLDENQAKGSLHDSGVEYEAHSDDKCEPKYFVFNSRTAYAIPILVFAFVCHPEVLPIYSELKDRSRRKMQTVSNISITGMLVMYLLAALFGYLTFYGEVEDELLHAYSKVYTLDIPLLMVRLAVLVAVTLTVPIVLFPIRTSVITLLFPKRPFSWIRHFLIAAVLIALNNVLVILVPTIKYIFGFIGASSATMLIFILPAVFYLKLVKKETFRSPQKVGALIFLVVGIFFMIGSMALIIIDWIYDPPNSKHH.

Residues 1-30 (MDPMELRNVNIEPDDESSSGESAPDSYIGI) form a disordered region. Topologically, residues 1-104 (MDPMELRNVN…GLSYAMANTG (104 aa)) are extracellular. Serine 49 is subject to Phosphoserine. A helical transmembrane segment spans residues 105-125 (IILFIIMLLAVAILSLYSVHL). The Cytoplasmic portion of the chain corresponds to 126 to 151 (LLKTAKEGGSLIYEKLGEKAFGWPGK). A helical membrane pass occupies residues 152–172 (IGAFVSITMQNIGAMSSYLFI). The Extracellular segment spans residues 173–195 (IKYELPEVIRAFMGLEENTGEWY). The chain crosses the membrane as a helical span at residues 196–216 (LNGNYLIIFVSVGIILPLSLL). Residues 217–220 (KNLG) lie on the Cytoplasmic side of the membrane. A helical membrane pass occupies residues 221 to 241 (YLGYTSGFSLTCMVFFVSVVI). Residues 242 to 332 (YKKFQIPCPL…PKYFVFNSRT (91 aa)) are Extracellular-facing. A disulfide bridge connects residues cysteine 249 and cysteine 321. 3 N-linked (GlcNAc...) asparagine glycosylation sites follow: asparagine 260, asparagine 264, and asparagine 276. Residues 333-353 (AYAIPILVFAFVCHPEVLPIY) traverse the membrane as a helical segment. The Cytoplasmic segment spans residues 354–369 (SELKDRSRRKMQTVSN). A helical transmembrane segment spans residues 370–390 (ISITGMLVMYLLAALFGYLTF). Residues 391 to 411 (YGEVEDELLHAYSKVYTLDIP) lie on the Extracellular side of the membrane. The helical transmembrane segment at 412-432 (LLMVRLAVLVAVTLTVPIVLF) threads the bilayer. Topologically, residues 433 to 453 (PIRTSVITLLFPKRPFSWIRH) are cytoplasmic. A helical membrane pass occupies residues 454–474 (FLIAAVLIALNNVLVILVPTI). The Extracellular portion of the chain corresponds to 475 to 476 (KY). A helical transmembrane segment spans residues 477 to 497 (IFGFIGASSATMLIFILPAVF). Over 498 to 514 (YLKLVKKETFRSPQKVG) the chain is Cytoplasmic. The helical transmembrane segment at 515-535 (ALIFLVVGIFFMIGSMALIII) threads the bilayer. Residues 536 to 547 (DWIYDPPNSKHH) lie on the Extracellular side of the membrane.

This sequence belongs to the amino acid/polyamine transporter 2 family. The disulfide bond plays an important role in substrate transport, but has no effect on trafficking to the cell surface. As to expression, expressed almost exclusively in embryonic and adult liver, and at lower levels in the kidney. Expressed at lower levels in adult muscle and pancreas. Detected in fetal blood vessels. Expressed in syncytiotrophoblas of placenta during first trimester and at term. Highly expressed in first trimester placenta compared to term placenta.

It is found in the cell membrane. The protein localises to the cell projection. The protein resides in the microvillus membrane. It catalyses the reaction L-methionine(in) + Na(+)(in) = L-methionine(out) + Na(+)(out). The catalysed reaction is L-asparagine(in) + Na(+)(in) = L-asparagine(out) + Na(+)(out). The enzyme catalyses L-threonine(in) + Na(+)(in) = L-threonine(out) + Na(+)(out). It carries out the reaction L-serine(in) + Na(+)(in) = L-serine(out) + Na(+)(out). It catalyses the reaction glycine(in) + Na(+)(in) = glycine(out) + Na(+)(out). The catalysed reaction is L-alanine(in) + Na(+)(in) = L-alanine(out) + Na(+)(out). The enzyme catalyses L-glutamine(in) + Na(+)(in) = L-glutamine(out) + Na(+)(out). It carries out the reaction L-histidine(in) + Na(+)(in) = L-histidine(out) + Na(+)(out). It catalyses the reaction L-cysteine(in) + Na(+)(in) = L-cysteine(out) + Na(+)(out). The catalysed reaction is L-proline(in) + Na(+)(in) = L-proline(out) + Na(+)(out). Its function is as follows. Symporter that cotransports neutral amino acids and sodium ions from the extraccellular to the intracellular side of the cell membrane. The transport is electrogenic, pH dependent and partially tolerates substitution of Na(+) by Li(+). Preferentially transports smaller amino acids, such as glycine, L-alanine, L-serine, L-asparagine and L-threonine, followed by L-cysteine, L-histidine, L-proline and L-glutamine and L-methionine. The sequence is that of Sodium-coupled neutral amino acid transporter 4 from Homo sapiens (Human).